We begin with the raw amino-acid sequence, 644 residues long: Kelch-like protein 34 (644 aa).

A BTB domain is found at 29 to 96 (CDVTLETEGS…IYTAWLSLSM (68 aa)). Residues 131 to 238 (CCFAANVAAR…PADVLRRVYS (108 aa)) form the BACK domain. A disordered region spans residues 304–329 (AARGQVAAPEPEEEEEELEEEEEEEE). A compositionally biased stretch (acidic residues) spans 313 to 329 (EPEEEEEELEEEEEEEE). Kelch repeat units follow at residues 320–366 (ELEE…TAGN), 367–425 (FLFV…AVGE), 426–473 (RLLA…VGDR), 475–526 (VVYI…VLRG), 528–571 (VFAF…VVEE), and 573–623 (ALLL…VLQL).

The sequence is that of Kelch-like protein 34 (KLHL34) from Homo sapiens (Human).